Consider the following 390-residue polypeptide: Chorismate synthase (390 aa).

NADP(+)-binding residues include arginine 48 and arginine 54. FMN-binding positions include 125–127 (RSS), 238–239 (NA), glycine 278, 293–297 (KPTSS), and arginine 319. The segment at 359–390 (PRIPGSTTNQIHPVEMQASAPRAEDPEPDESS) is disordered.

It belongs to the chorismate synthase family. As to quaternary structure, homotetramer. Requires FMNH2 as cofactor.

The enzyme catalyses 5-O-(1-carboxyvinyl)-3-phosphoshikimate = chorismate + phosphate. The protein operates within metabolic intermediate biosynthesis; chorismate biosynthesis; chorismate from D-erythrose 4-phosphate and phosphoenolpyruvate: step 7/7. Catalyzes the anti-1,4-elimination of the C-3 phosphate and the C-6 proR hydrogen from 5-enolpyruvylshikimate-3-phosphate (EPSP) to yield chorismate, which is the branch point compound that serves as the starting substrate for the three terminal pathways of aromatic amino acid biosynthesis. This reaction introduces a second double bond into the aromatic ring system. This is Chorismate synthase from Nitrosomonas europaea (strain ATCC 19718 / CIP 103999 / KCTC 2705 / NBRC 14298).